Consider the following 387-residue polypeptide: Small ribosomal subunit biogenesis GTPase RsgA (387 aa).

One can recognise a CP-type G domain in the interval 112-273 (YDGLKPVAAN…LIDSPGVREF (162 aa)). GTP is bound by residues 159–162 (NKID) and 213–221 (GQSGVGKSS). Positions 297, 302, 304, and 310 each coordinate Zn(2+).

This sequence belongs to the TRAFAC class YlqF/YawG GTPase family. RsgA subfamily. As to quaternary structure, monomer. Associates with 30S ribosomal subunit, binds 16S rRNA. It depends on Zn(2+) as a cofactor.

The protein localises to the cytoplasm. Its function is as follows. One of several proteins that assist in the late maturation steps of the functional core of the 30S ribosomal subunit. Helps release RbfA from mature subunits. May play a role in the assembly of ribosomal proteins into the subunit. Circularly permuted GTPase that catalyzes slow GTP hydrolysis, GTPase activity is stimulated by the 30S ribosomal subunit. This chain is Small ribosomal subunit biogenesis GTPase RsgA, found in Vibrio cholerae serotype O1 (strain ATCC 39315 / El Tor Inaba N16961).